Consider the following 309-residue polypeptide: MDKHIPVLLDESIKYLNIKLNGIYVDCTLGRAGHASEILKRLSQNGFLYAIDQDKTAIGQAKEKLEKISNNFFLIQGNFSNLSALLAINHIFSVDGILYDLGVSSPQLDIGSRGFSYRIDGPLDMRMDITNNNLTADTIINQYSETQIEDILFKYGEESFAKSIAKKIVLSRPINSTLQLVEVIKSALPQKVLKQKKHPAKKTFQALRIFINNELIVLENSLKQALDLLNSKGRICVITFHSLEEKIVKNIFNSSTNYFQEQLFNNLPIKANLNSQFKLVIKKPIKPSLLELENNHRSHSAKLWVIEKN.

S-adenosyl-L-methionine contacts are provided by residues 32 to 34 (AGH), Asp-52, Phe-79, Asp-100, and Gln-107.

It belongs to the methyltransferase superfamily. RsmH family.

The protein resides in the cytoplasm. It catalyses the reaction cytidine(1402) in 16S rRNA + S-adenosyl-L-methionine = N(4)-methylcytidine(1402) in 16S rRNA + S-adenosyl-L-homocysteine + H(+). In terms of biological role, specifically methylates the N4 position of cytidine in position 1402 (C1402) of 16S rRNA. The sequence is that of Ribosomal RNA small subunit methyltransferase H from Mycoplasma capricolum subsp. capricolum (strain California kid / ATCC 27343 / NCTC 10154).